Reading from the N-terminus, the 611-residue chain is Probable cysteine desulfurase 1 (611 aa).

The cargo-loading domain stretch occupies residues methionine 1–glutamine 208. Lysine 428 bears the N6-(pyridoxal phosphate)lysine mark. Catalysis depends on cysteine 566, which acts as the Cysteine persulfide intermediate.

The protein belongs to the class-V pyridoxal-phosphate-dependent aminotransferase family. Csd subfamily. In terms of assembly, there are 1-2 copies of this protein in each type 2A encapsulin shell. It depends on pyridoxal 5'-phosphate as a cofactor.

It localises to the encapsulin nanocompartment. It catalyses the reaction (sulfur carrier)-H + L-cysteine = (sulfur carrier)-SH + L-alanine. In terms of biological role, cargo protein of a type 2A encapsulin nanocompartment involved in sulfur metabolism. Cysteine desulfurases mobilize the sulfur from L-cysteine to yield L-alanine, an essential step in sulfur metabolism for biosynthesis of a variety of sulfur-containing biomolecules. The sequence is that of Probable cysteine desulfurase 1 from Mycobacterium leprae (strain TN).